Here is a 333-residue protein sequence, read N- to C-terminus: Adenosine deaminase (333 aa).

Residues histidine 12 and histidine 14 each contribute to the Zn(2+) site. Histidine 14, aspartate 16, and glycine 170 together coordinate substrate. Position 197 (histidine 197) interacts with Zn(2+). The Proton donor role is filled by glutamate 200. Aspartate 278 is a binding site for Zn(2+). Substrate is bound at residue aspartate 279.

Belongs to the metallo-dependent hydrolases superfamily. Adenosine and AMP deaminases family. Adenosine deaminase subfamily. Zn(2+) is required as a cofactor.

The catalysed reaction is adenosine + H2O + H(+) = inosine + NH4(+). The enzyme catalyses 2'-deoxyadenosine + H2O + H(+) = 2'-deoxyinosine + NH4(+). In terms of biological role, catalyzes the hydrolytic deamination of adenosine and 2-deoxyadenosine. This Escherichia coli O7:K1 (strain IAI39 / ExPEC) protein is Adenosine deaminase.